The primary structure comprises 257 residues: Glycerol-3-phosphate acyltransferase (257 aa).

6 helical membrane passes run 7–27, 66–86, 104–124, 140–160, 164–184, and 203–223; these read IVMA…LIGS, ILTL…TYII, AILV…PIFF, ITVD…ILLI, MSLS…VPGI, and YVIK…SLLI.

This sequence belongs to the PlsY family. Probably interacts with PlsX.

The protein localises to the cell membrane. It catalyses the reaction an acyl phosphate + sn-glycerol 3-phosphate = a 1-acyl-sn-glycero-3-phosphate + phosphate. Its pathway is lipid metabolism; phospholipid metabolism. Catalyzes the transfer of an acyl group from acyl-phosphate (acyl-PO(4)) to glycerol-3-phosphate (G3P) to form lysophosphatidic acid (LPA). This enzyme utilizes acyl-phosphate as fatty acyl donor, but not acyl-CoA or acyl-ACP. The sequence is that of Glycerol-3-phosphate acyltransferase from Ureaplasma parvum serovar 3 (strain ATCC 700970).